Consider the following 154-residue polypeptide: MYKLQFLSCIALTLALVANSAPTLSSTKDTKKQLEPLLLDLQFLLKEVNNYENLKLSRMLTFKFYMPKKATELKHLQCLMEELKPLEEVLNLAQSKNSHLTNIKDSMNNINLTVSELKGSETGFTCEYDDETVTVVEFLNKWITFCQSIYSTLT.

The signal sequence occupies residues 1 to 20 (MYKLQFLSCIALTLALVANS). O-linked (GalNAc...) threonine glycosylation is present at T23. C78 and C126 are oxidised to a cystine. A glycan (N-linked (GlcNAc...) asparagine) is linked at N111.

The protein belongs to the IL-2 family.

Its subcellular location is the secreted. Cytokine produced by activated CD4-positive helper T-cells and to a lesser extend activated CD8-positive T-cells and natural killer (NK) cells that plays pivotal roles in the immune response and tolerance. Binds to a receptor complex composed of either the high-affinity trimeric IL-2R (IL2RA/CD25, IL2RB/CD122 and IL2RG/CD132) or the low-affinity dimeric IL-2R (IL2RB and IL2RG). Interaction with the receptor leads to oligomerization and conformation changes in the IL-2R subunits resulting in downstream signaling starting with phosphorylation of JAK1 and JAK3. In turn, JAK1 and JAK3 phosphorylate the receptor to form a docking site leading to the phosphorylation of several substrates including STAT5. This process leads to activation of several pathways including STAT, phosphoinositide-3-kinase/PI3K and mitogen-activated protein kinase/MAPK pathways. Functions as a T-cell growth factor and can increase NK-cell cytolytic activity as well. Promotes strong proliferation of activated B-cells and subsequently immunoglobulin production. Plays a pivotal role in regulating the adaptive immune system by controlling the survival and proliferation of regulatory T-cells, which are required for the maintenance of immune tolerance. Moreover, participates in the differentiation and homeostasis of effector T-cell subsets, including Th1, Th2, Th17 as well as memory CD8-positive T-cells. The protein is Interleukin-2 (IL2) of Camelus bactrianus (Bactrian camel).